A 72-amino-acid chain; its full sequence is Translation initiation factor IF-1 (72 aa).

One can recognise an S1-like domain in the interval 1-72; the sequence is MSKEDSFEME…SKGRITYRAR (72 aa).

The protein belongs to the IF-1 family. As to quaternary structure, component of the 30S ribosomal translation pre-initiation complex which assembles on the 30S ribosome in the order IF-2 and IF-3, IF-1 and N-formylmethionyl-tRNA(fMet); mRNA recruitment can occur at any time during PIC assembly.

The protein localises to the cytoplasm. Its function is as follows. One of the essential components for the initiation of protein synthesis. Stabilizes the binding of IF-2 and IF-3 on the 30S subunit to which N-formylmethionyl-tRNA(fMet) subsequently binds. Helps modulate mRNA selection, yielding the 30S pre-initiation complex (PIC). Upon addition of the 50S ribosomal subunit IF-1, IF-2 and IF-3 are released leaving the mature 70S translation initiation complex. The sequence is that of Translation initiation factor IF-1 from Pseudomonas savastanoi pv. phaseolicola (strain 1448A / Race 6) (Pseudomonas syringae pv. phaseolicola (strain 1448A / Race 6)).